A 215-amino-acid chain; its full sequence is Adenylate kinase (215 aa).

10-15 (GTGKGT) provides a ligand contact to ATP. Residues 30–59 (STGHILRKISTKKTLFGEKIKNIINSGKLV) are NMP. Residues threonine 31, arginine 36, 57-59 (KLV), 85-88 (GFPR), and glutamine 92 contribute to the AMP site. The interval 122 to 157 (TRTINPITGTIYNNVIQKNSELKNLKINTLKSRLDD) is LID. Residues arginine 123 and 132 to 133 (IY) contribute to the ATP site. Residues arginine 154 and arginine 165 each contribute to the AMP site. Residue asparagine 198 coordinates ATP.

The protein belongs to the adenylate kinase family. As to quaternary structure, monomer.

Its subcellular location is the cytoplasm. The enzyme catalyses AMP + ATP = 2 ADP. Its pathway is purine metabolism; AMP biosynthesis via salvage pathway; AMP from ADP: step 1/1. Functionally, catalyzes the reversible transfer of the terminal phosphate group between ATP and AMP. Plays an important role in cellular energy homeostasis and in adenine nucleotide metabolism. The protein is Adenylate kinase of Buchnera aphidicola subsp. Baizongia pistaciae (strain Bp).